The following is a 401-amino-acid chain: Phosphoglycerate kinase (401 aa).

Residues 24-26 (DFN), Arg40, 63-66 (HFGR), Arg122, and Arg155 each bind substrate. Residues Lys206, Gly297, Glu328, and 357-360 (GGDS) each bind ATP.

The protein belongs to the phosphoglycerate kinase family. As to quaternary structure, monomer.

Its subcellular location is the cytoplasm. The catalysed reaction is (2R)-3-phosphoglycerate + ATP = (2R)-3-phospho-glyceroyl phosphate + ADP. Its pathway is carbohydrate degradation; glycolysis; pyruvate from D-glyceraldehyde 3-phosphate: step 2/5. The sequence is that of Phosphoglycerate kinase from Prochlorococcus marinus (strain NATL2A).